The chain runs to 772 residues: Mitochondrial intermediate peptidase (772 aa).

A mitochondrion-targeting transit peptide spans 1-42 (MFANSARNALKKRPQNLQPFRFQGCLFSKRANRPLTTKVQHL). His-556 is a Zn(2+) binding site. Glu-557 is a catalytic residue. His-560 and His-563 together coordinate Zn(2+).

The protein belongs to the peptidase M3 family. Zn(2+) serves as cofactor.

It localises to the mitochondrion matrix. It carries out the reaction Release of an N-terminal octapeptide as second stage of processing of some proteins imported into the mitochondrion.. In terms of biological role, cleaves proteins, imported into the mitochondrion, to their mature size. While most mitochondrial precursor proteins are processed to the mature form in one step by mitochondrial processing peptidase (MPP), the sequential cleavage by MIP of an octapeptide after initial processing by MPP is a required step for a subgroup of nuclear-encoded precursor proteins destined for the matrix or the inner membrane. This Laccaria bicolor (strain S238N-H82 / ATCC MYA-4686) (Bicoloured deceiver) protein is Mitochondrial intermediate peptidase (OCT1).